The chain runs to 43 residues: Neurotrophin-4 (43 aa).

It belongs to the NGF-beta family.

Its function is as follows. NT-4 could play a role in oogenesis and/or early embryogenesis. NT-4 interacts with the low affinity NGF receptor and elicits neurite outgrowth from explanted dorsal root ganglia with no and lower activity in sympathetic and nodose ganglia, respectively. This is Neurotrophin-4 (NTF4) from Macrovipera lebetinus (Levantine viper).